A 415-amino-acid polypeptide reads, in one-letter code: Membrane-bound ghrelin O-acyltransferase mboat4 (415 aa).

Residues 1–6 (MIDLLW) lie on the Lumenal side of the membrane. Residues 7–28 (ISSDGHPQLFYQFINIPFAFLF) form a helical membrane-spanning segment. Residues 29–42 (HCLSSQGHLSIINR) lie on the Cytoplasmic side of the membrane. A helical membrane pass occupies residues 43–58 (YVYLAMGGFMLAIATM). At 59–61 (GPY) the chain is on the lumenal side. The chain crosses the membrane as a helical span at residues 62 to 78 (SSLLFLSAIKLLLLIHY). Topologically, residues 79-84 (IHPMHL) are cytoplasmic. The chain crosses the membrane as a helical span at residues 85 to 103 (HRWILGLQMCWQTCWHLYV). The Lumenal portion of the chain corresponds to 104-122 (QYQIYWLQEAPDSRLLLAI). Residues 123-138 (SALMLMTQRISSLSLD) form a helical membrane-spanning segment. At 139-193 (FQEGTISNQSILIPFLTYSLYFPALLGGPLCSFNAFVQSVERQHTSMTSYLGNLT) the chain is on the cytoplasmic side. A helical transmembrane segment spans residues 194 to 214 (SKISQVIVLVWIKQLFSELLK). Residues 215–227 (SATFNIDSVCLDV) are Lumenal-facing. A helical transmembrane segment spans residues 228 to 247 (LWIWIFSLTLRLNYYAHWKM). Residues 248–312 (SECVNNAAGL…RKIVFNRTSR (65 aa)) are Cytoplasmic-facing. Active-site residues include Asn-295 and His-326. Residues 313-326 (SPLFMTFGFSALWH) traverse the membrane as a helical segment. The Lumenal portion of the chain corresponds to 327–328 (GL). The helical transmembrane segment at 329-345 (HPGQILGFLIWAVTVQA) threads the bilayer. Over 346-364 (DYKLHRFSHPKLNSLWRKR) the chain is Cytoplasmic. The helical transmembrane segment at 365–385 (LYVCVNWAFTQLTVACVVVCV) threads the bilayer. At 386-394 (ELQSLASVK) the chain is on the lumenal side. Residues 395–415 (LLWSSCIAVFPLLSALILIIL) form a helical membrane-spanning segment.

It belongs to the membrane-bound acyltransferase family. In terms of assembly, monomer. In terms of processing, not glycosylated.

It localises to the endoplasmic reticulum membrane. It catalyses the reaction octanoyl-CoA + L-seryl-[protein] = O-octanoyl-L-seryl-[protein] + CoA. It carries out the reaction decanoyl-CoA + L-seryl-[protein] = O-decanoyl-L-seryl-[protein] + CoA. The enzyme catalyses L-seryl-[protein] + acetyl-CoA = O-acetyl-L-seryl-[protein] + CoA. The catalysed reaction is L-seryl-[protein] + butanoyl-CoA = O-butanoyl-L-seryl-[protein] + CoA. It catalyses the reaction pentanoyl-CoA + L-seryl-[protein] = O-pentanoyl-L-seryl-[protein] + CoA. It carries out the reaction hexanoyl-CoA + L-seryl-[protein] = O-hexanoyl-L-seryl-[protein] + CoA. The enzyme catalyses heptanoyl-CoA + L-seryl-[protein] = O-heptanoyl-L-seryl-[protein] + CoA. The catalysed reaction is nonanoyl-CoA + L-seryl-[protein] = O-nonanoyl-L-seryl-[protein] + CoA. It catalyses the reaction L-seryl-[protein] + dodecanoyl-CoA = O-dodecanoyl-L-seryl-[protein] + CoA. It carries out the reaction L-seryl-[protein] + tetradecanoyl-CoA = O-tetradecanoyl-L-seryl-[protein] + CoA. The enzyme catalyses a fatty acyl-CoA + L-seryl-[protein] = O-fatty acyl-L-seryl-[protein] + CoA. Its function is as follows. Catalyzes ghrelin acylation at 'Ser-3' using preferentially octanoyl-CoA, hexanoyl-CoA and decanoyl-CoA as acyl-CoA donors leading to ghrelin activity. In vitro uses also acyl-CoA donors of different lengths from short-chain (C2) to long-chain fatty acids (C16) knowing that acyl-CoA donors from butanoyl-CoA (C4) to dodecanoyl-CoA (C12) are more efficient compared to longer acyl-CoA donors, such as myristoyl-CoA (C14) and palmitoyl-CoA (C16) that are not efficient. The polypeptide is Membrane-bound ghrelin O-acyltransferase mboat4 (Danio rerio (Zebrafish)).